A 240-amino-acid polypeptide reads, in one-letter code: Splicing factor rtf2 (240 aa).

Disordered regions lie at residues 1–22 and 181–240; these read MGND…GKVP and SLNK…RVKI. Residues 185 to 210 show a composition bias toward basic residues; the sequence is ASKKSNKNGDKKRKHVSKSNSKHAKH. Composition is skewed to basic and acidic residues over residues 211–224 and 231–240; these read ELRT…ENVK and DMERVKRVKI.

It belongs to the rtf2 family. In terms of assembly, interacts with pcn1.

Its subcellular location is the nucleus. Its function is as follows. Putative splicing factor that is required for the correct splicing of a subset of pre-mRNAs. Required for the correct splicing of rtf1, a replication termination factor that mediates site-specific replication termination at replication barrier RTS1. This chain is Splicing factor rtf2, found in Schizosaccharomyces pombe (strain 972 / ATCC 24843) (Fission yeast).